A 372-amino-acid polypeptide reads, in one-letter code: NAD(P)H-quinone oxidoreductase subunit 1 (372 aa).

9 consecutive transmembrane segments (helical) span residues 27–47 (TIWLPIPMLLMIIGATVGVLV), 65–85 (PEYIGPLGILAPVADGIKLVF), 97–117 (WLFTLGPILVVIPVFFSYLIV), 128–148 (LGIGIFFWIALSSIAPIGLLM), 176–196 (LALAVLAVVMMSNSLSTIDIV), 204–224 (ILGWNVIRQPIGFMLFWIAAL), 249–269 (YAGMKFALFYLGSYVNLVLSS), 308–328 (GLGLVMTLLKAYFFLFLAILL), and 351–371 (VGLVNLLLTAGLKLAFPFAFG).

It belongs to the complex I subunit 1 family. NDH-1 is composed of at least 11 different subunits.

The protein resides in the cellular thylakoid membrane. It carries out the reaction a plastoquinone + NADH + (n+1) H(+)(in) = a plastoquinol + NAD(+) + n H(+)(out). It catalyses the reaction a plastoquinone + NADPH + (n+1) H(+)(in) = a plastoquinol + NADP(+) + n H(+)(out). NDH-1 shuttles electrons from an unknown electron donor, via FMN and iron-sulfur (Fe-S) centers, to quinones in the respiratory and/or the photosynthetic chain. The immediate electron acceptor for the enzyme in this species is believed to be plastoquinone. Couples the redox reaction to proton translocation, and thus conserves the redox energy in a proton gradient. This chain is NAD(P)H-quinone oxidoreductase subunit 1, found in Acaryochloris marina (strain MBIC 11017).